We begin with the raw amino-acid sequence, 232 residues long: Orotidine 5'-phosphate decarboxylase (232 aa).

Substrate contacts are provided by residues Asp13, Lys35, 62–71 (DLKFHDIPNT), Thr121, Arg182, Gln191, Gly211, and Arg212. Catalysis depends on Lys64, which acts as the Proton donor.

Belongs to the OMP decarboxylase family. Type 1 subfamily. In terms of assembly, homodimer.

The catalysed reaction is orotidine 5'-phosphate + H(+) = UMP + CO2. The protein operates within pyrimidine metabolism; UMP biosynthesis via de novo pathway; UMP from orotate: step 2/2. Catalyzes the decarboxylation of orotidine 5'-monophosphate (OMP) to uridine 5'-monophosphate (UMP). The polypeptide is Orotidine 5'-phosphate decarboxylase (Teredinibacter turnerae (strain ATCC 39867 / T7901)).